A 354-amino-acid polypeptide reads, in one-letter code: Kelch domain-containing protein 8B (354 aa).

Kelch repeat units follow at residues 1 to 31 (MATG…FQDG), 32 to 79 (HLLV…VLGK), 81 to 127 (VLVV…ERDG), 128 to 175 (MVYA…LHGN), 176 to 222 (KIYV…MAEG), 224 to 281 (VFSL…SLGD), 282 to 329 (HVVA…QAGP), and 331 to 354 (LFAI…RDGV).

The protein resides in the cytoplasm. Its subcellular location is the midbody. Functionally, involved in pinching off the separated nuclei at the cleavage furrow and in cytokinesis. Required for mitotic integrity and maintenance of chromosomal stability. Protects cells against mitotic errors, centrosomal amplification, micronucleus formation and aneuploidy. Plays a key role of midbody function involving abscission of the daughter cells during cytokinesis and appropriate chromosomal and nuclear segregation into the daughter cells. The sequence is that of Kelch domain-containing protein 8B (KLHDC8B) from Bos taurus (Bovine).